The chain runs to 187 residues: UPF0301 protein Spro_4027 (187 aa).

Belongs to the UPF0301 (AlgH) family.

The chain is UPF0301 protein Spro_4027 from Serratia proteamaculans (strain 568).